We begin with the raw amino-acid sequence, 204 residues long: Thymidylate kinase (204 aa).

Residue Gly11–Thr18 coordinates ATP.

Belongs to the thymidylate kinase family.

The enzyme catalyses dTMP + ATP = dTDP + ADP. It participates in pyrimidine metabolism; dTTP biosynthesis. This Bos taurus (Bovine) protein is Thymidylate kinase (TMK).